The sequence spans 404 residues: Tryptophan synthase beta chain (404 aa).

N6-(pyridoxal phosphate)lysine is present on K98.

It belongs to the TrpB family. In terms of assembly, tetramer of two alpha and two beta chains. Requires pyridoxal 5'-phosphate as cofactor.

The catalysed reaction is (1S,2R)-1-C-(indol-3-yl)glycerol 3-phosphate + L-serine = D-glyceraldehyde 3-phosphate + L-tryptophan + H2O. It participates in amino-acid biosynthesis; L-tryptophan biosynthesis; L-tryptophan from chorismate: step 5/5. Functionally, the beta subunit is responsible for the synthesis of L-tryptophan from indole and L-serine. This is Tryptophan synthase beta chain from Rhodopseudomonas palustris (strain BisB5).